Here is an 865-residue protein sequence, read N- to C-terminus: Protein translocase subunit SecA (865 aa).

Residues Q93, 111-115 (GEGKT), and D501 contribute to the ATP site. Zn(2+) contacts are provided by C841, C843, C852, and C853.

This sequence belongs to the SecA family. Monomer and homodimer. Part of the essential Sec protein translocation apparatus which comprises SecA, SecYEG and auxiliary proteins SecDF-YajC and YidC. Requires Zn(2+) as cofactor.

The protein resides in the cell inner membrane. Its subcellular location is the cytoplasm. It catalyses the reaction ATP + H2O + cellular proteinSide 1 = ADP + phosphate + cellular proteinSide 2.. Its function is as follows. Part of the Sec protein translocase complex. Interacts with the SecYEG preprotein conducting channel. Has a central role in coupling the hydrolysis of ATP to the transfer of proteins into and across the cell membrane, serving as an ATP-driven molecular motor driving the stepwise translocation of polypeptide chains across the membrane. In Helicobacter acinonychis (strain Sheeba), this protein is Protein translocase subunit SecA.